A 1107-amino-acid chain; its full sequence is Lon protease homolog, mitochondrial (1107 aa).

The transit peptide at 1-31 (MLSRQRIPRILASRTSLAHSIRSFTSTTSSI) directs the protein to the mitochondrion. Disordered regions lie at residues 32–152 (RPVA…PGDK) and 273–329 (PEAA…PYEP). The segment covering 51–60 (TNLSSFSTYT) has biased composition (polar residues). The span at 80–101 (EEERKANVEHAEAEAKEAESKQ) shows a compositional bias: basic and acidic residues. Positions 122–141 (GAAGGSSAGSGSGADGGSGD) are enriched in gly residues. The span at 142-152 (GGKRGRKPGDK) shows a compositional bias: basic and acidic residues. The 276-residue stretch at 166 to 441 (VMAIPIAKRP…KALLVLKKEH (276 aa)) folds into the Lon N-terminal domain. 594–601 (GPPGVGKT) lines the ATP pocket. The segment at 808–858 (PESEALTEEGKAAQEETEKKKSEEAASGETSSPKAATEASEKETTEKPRVA) is disordered. The span at 815-831 (EEGKAAQEETEKKKSEE) shows a compositional bias: basic and acidic residues. Residues 832–845 (AASGETSSPKAATE) are compositionally biased toward low complexity. Residues 846–856 (ASEKETTEKPR) are compositionally biased toward basic and acidic residues. Residues 891 to 1077 (VTPPGVTMGL…SEVFDLIFPK (187 aa)) enclose the Lon proteolytic domain. Active-site residues include serine 983 and lysine 1026. The tract at residues 1085 to 1107 (KSRIIEDDKSEKEESKKKNDDDE) is disordered.

It belongs to the peptidase S16 family. In terms of assembly, homohexamer or homoheptamer. Organized in a ring with a central cavity.

The protein resides in the mitochondrion matrix. The catalysed reaction is Hydrolysis of proteins in presence of ATP.. In terms of biological role, ATP-dependent serine protease that mediates the selective degradation of misfolded, unassembled or oxidatively damaged polypeptides as well as certain short-lived regulatory proteins in the mitochondrial matrix. May also have a chaperone function in the assembly of inner membrane protein complexes. Participates in the regulation of mitochondrial gene expression and in the maintenance of the integrity of the mitochondrial genome. Binds to mitochondrial DNA in a site-specific manner. The sequence is that of Lon protease homolog, mitochondrial (pim1) from Neurospora crassa (strain ATCC 24698 / 74-OR23-1A / CBS 708.71 / DSM 1257 / FGSC 987).